We begin with the raw amino-acid sequence, 377 residues long: Leukocyte elastase inhibitor (377 aa).

Met1 bears the N-acetylmethionine mark.

The protein belongs to the serpin family. Ov-serpin subfamily.

Its subcellular location is the cytoplasm. Functionally, regulates the activity of the neutrophil proteases. The chain is Leukocyte elastase inhibitor (serpinb1) from Xenopus laevis (African clawed frog).